We begin with the raw amino-acid sequence, 284 residues long: Probable O-methyltransferase ustE (284 aa).

2 N-linked (GlcNAc...) asparagine glycosylation sites follow: N22 and N29. 2 consecutive transmembrane segments (helical) span residues 88–108 and 157–177; these read LLLLFMDILAAAKHFWFVLTV and YLATGFIIFAVGLVTECVCEI. Residue N205 is glycosylated (N-linked (GlcNAc...) asparagine). Residues 215–235 form a helical membrane-spanning segment; it reads GLALASGGMIYGMSIAMFFMW. N264 carries N-linked (GlcNAc...) asparagine glycosylation.

Belongs to the class VI-like SAM-binding methyltransferase superfamily. Isoprenylcysteine carboxyl methyltransferase family.

The protein localises to the membrane. It participates in secondary metabolite biosynthesis. Functionally, probable O-methyltransferase; part of the gene cluster that mediates the biosynthesis of ustilaginoidins, dimeric gamma-naphthopyrones isolated from different fungal species. The first step in the biosynthesis of ustilaginoidins is the production of gamma-naphthopyrone precursor YWA1 by the non-reducing polyketide synthase ustP, via condensation of one acetyl-CoA starter unit with 6 malonyl-CoA units. YWA1 is then probably substrate of the ustZ to yield norrubrofusarin via a dehydration reaction. A key enzyme in the biosynthetic pathway is the laccase ustL, which catalyzes the oxidative dimerization of norrubrofusarin to ustilaginoidin A. It can produce the M- and P-atropisomers in varying amounts, depending on the reaction conditions. For the biosynthesis of 3-methylustilaginoid in derivatives such as chaetochromin A, a methylated derivative of YWA1 is required. The C-methylation is considered to be catalyzed by ustM, the phosphopantetheine attachment site of which indicates that it acts on the growing polyketide chain before release of the product. For the biosynthesis of chaetochromin A, it is assumed that saturation of the D2 double bond takes place before dimerization, and is probably catalyzed by an external reductase because no candidate gene was identified within the cluster. In Ustilaginoidea virens (Rice false smut fungus), this protein is Probable O-methyltransferase ustE.